We begin with the raw amino-acid sequence, 372 residues long: Probable arabinan endo-1,5-alpha-L-arabinosidase B (372 aa).

Positions 1–16 (MTVLVALFCLVTWTLC) are cleaved as a signal peptide. Over residues 23–34 (STQGTQQPQQPE) the composition is skewed to low complexity. The interval 23–52 (STQGTQQPQQPEKTPHPHPQPEDAFPPTHA) is disordered. The active-site Proton acceptor is the Asp-59. The N-linked (GlcNAc...) asparagine glycan is linked to Asn-120. The Proton donor role is filled by Glu-252. Residue Asn-363 is glycosylated (N-linked (GlcNAc...) asparagine).

The protein belongs to the glycosyl hydrolase 43 family.

Its subcellular location is the secreted. The enzyme catalyses Endohydrolysis of (1-&gt;5)-alpha-arabinofuranosidic linkages in (1-&gt;5)-arabinans.. Its pathway is glycan metabolism; L-arabinan degradation. Endo-1,5-alpha-L-arabinanase involved in degradation of pectin. Its preferred substrate is linear 1,5-alpha-L-arabinan. In Aspergillus fumigatus (strain ATCC MYA-4609 / CBS 101355 / FGSC A1100 / Af293) (Neosartorya fumigata), this protein is Probable arabinan endo-1,5-alpha-L-arabinosidase B (abnB).